The following is a 305-amino-acid chain: Serine/threonine-protein phosphatase PP-X homolog 3 (305 aa).

4 residues coordinate Mn(2+): aspartate 53, histidine 55, aspartate 81, and asparagine 113. Residue histidine 114 is the Proton donor of the active site. Histidine 163 and histidine 237 together coordinate Mn(2+).

This sequence belongs to the PPP phosphatase family. PP-4 (PP-X) subfamily. It depends on Mn(2+) as a cofactor.

The catalysed reaction is O-phospho-L-seryl-[protein] + H2O = L-seryl-[protein] + phosphate. The enzyme catalyses O-phospho-L-threonyl-[protein] + H2O = L-threonyl-[protein] + phosphate. The chain is Serine/threonine-protein phosphatase PP-X homolog 3 (Ppx3) from Paramecium tetraurelia.